The following is a 257-amino-acid chain: Large ribosomal subunit protein uL3 (257 aa).

Glutamine 151 is subject to N5-methylglutamine. The tract at residues 218-257 (YPASIKSAANTNTAPADAPVETPAEEAVVDTAATDGAQES) is disordered. The segment covering 225 to 236 (AANTNTAPADAP) has biased composition (low complexity).

The protein belongs to the universal ribosomal protein uL3 family. In terms of assembly, part of the 50S ribosomal subunit. Forms a cluster with proteins L14 and L19. Post-translationally, methylated by PrmB.

One of the primary rRNA binding proteins, it binds directly near the 3'-end of the 23S rRNA, where it nucleates assembly of the 50S subunit. The chain is Large ribosomal subunit protein uL3 from Sphingopyxis alaskensis (strain DSM 13593 / LMG 18877 / RB2256) (Sphingomonas alaskensis).